The chain runs to 357 residues: Peptide chain release factor 1 (357 aa).

An N5-methylglutamine modification is found at glutamine 234. Positions 283–313 (SKKQEQRSSNRKQQVGSGDRSERIRTYNFPQ) are disordered.

The protein belongs to the prokaryotic/mitochondrial release factor family. Methylated by PrmC. Methylation increases the termination efficiency of RF1.

The protein resides in the cytoplasm. Its function is as follows. Peptide chain release factor 1 directs the termination of translation in response to the peptide chain termination codons UAG and UAA. The chain is Peptide chain release factor 1 from Borrelia garinii subsp. bavariensis (strain ATCC BAA-2496 / DSM 23469 / PBi) (Borreliella bavariensis).